The following is a 310-amino-acid chain: Isoflavone reductase homolog P3 (310 aa).

NADP(+) is bound by residues 12-18, Arg37, and Lys46; that span reads GGTGYIG. Lys134 acts as the Proton acceptor in catalysis. Arg138 contacts NADP(+).

It belongs to the NmrA-type oxidoreductase family. Isoflavone reductase subfamily.

It is found in the cytoplasm. The protein is Isoflavone reductase homolog P3 of Arabidopsis thaliana (Mouse-ear cress).